A 257-amino-acid polypeptide reads, in one-letter code: UPF0246 protein Ping_3037 (257 aa).

This sequence belongs to the UPF0246 family.

The chain is UPF0246 protein Ping_3037 from Psychromonas ingrahamii (strain DSM 17664 / CCUG 51855 / 37).